The sequence spans 70 residues: DNA-directed RNA polymerase subunit omega (70 aa).

This sequence belongs to the RNA polymerase subunit omega family. As to quaternary structure, the RNAP catalytic core consists of 2 alpha, 1 beta, 1 beta' and 1 omega subunit. When a sigma factor is associated with the core the holoenzyme is formed, which can initiate transcription.

The catalysed reaction is RNA(n) + a ribonucleoside 5'-triphosphate = RNA(n+1) + diphosphate. Promotes RNA polymerase assembly. Latches the N- and C-terminal regions of the beta' subunit thereby facilitating its interaction with the beta and alpha subunits. The sequence is that of DNA-directed RNA polymerase subunit omega from Staphylococcus haemolyticus (strain JCSC1435).